The sequence spans 1190 residues: JNK-interacting protein (1190 aa).

Positions 1–35 are disordered; the sequence is MACNLSPVNEMADSITSSTPSEIVYGGPGSPDEHR. The RH1 domain occupies 24-112; it reads VYGGPGSPDE…QTQYEREKAL (89 aa). Residues 78-165 are a coiled coil; the sequence is LDLAYLERDE…TDHASRLEER (88 aa). Residues 263-364 are disordered; that stretch reads DEFSSDIEPS…DDTSDDGSLG (102 aa). Over residues 277-292 the composition is skewed to polar residues; sequence PQSSADALTSPITTKE. A coiled-coil region spans residues 383–491; sequence KNALNIVKND…EESIKWTEMQ (109 aa). In terms of domain architecture, RH2 spans 456–542; the sequence is RKRFTRSEMQ…RASSSRGKMT (87 aa). Positions 775-829 are disordered; the sequence is EDGVPTYCSNDMKPSPKRTRDFSISEVAPVDSSAPVKEDPLPPPANRPGGRAALP.

This sequence belongs to the JIP scaffold family. As to expression, expressed in neurons of the ventral cord, retrovesicular and preanal ganglia and nerve ring, intestinal cells, seam and hypodermal cells, body wall, head muscle and pharynx.

Its subcellular location is the cytoplasm. The protein resides in the perinuclear region. Functionally, the JNK-interacting protein (JIP) group of scaffold proteins selectively mediates JNK signaling by aggregating specific components of the MAPK cascade to form a functional JNK signaling module. May function as a regulator of synaptic vesicle transport, through interactions with the JNK-signaling components and motor proteins. Binds specific components of the JNK signaling pathway namely jnk-1, jkk-1 and sek-1. Associates with components of the motor protein, kinesin-1. Pre-assembled unc-16 scaffolding complexes are then transported as a cargo of kinesin, to the required subcellular location. Regulates the retrograde transport of autophagosomes from the neurites to the cell body of AIY interneurons. The chain is JNK-interacting protein from Caenorhabditis elegans.